A 235-amino-acid polypeptide reads, in one-letter code: Ubiquinone biosynthesis O-methyltransferase (235 aa).

The S-adenosyl-L-methionine site is built by R39, G59, D80, and M124.

It belongs to the methyltransferase superfamily. UbiG/COQ3 family.

It catalyses the reaction a 3-demethylubiquinol + S-adenosyl-L-methionine = a ubiquinol + S-adenosyl-L-homocysteine + H(+). It carries out the reaction a 3-(all-trans-polyprenyl)benzene-1,2-diol + S-adenosyl-L-methionine = a 2-methoxy-6-(all-trans-polyprenyl)phenol + S-adenosyl-L-homocysteine + H(+). It participates in cofactor biosynthesis; ubiquinone biosynthesis. In terms of biological role, O-methyltransferase that catalyzes the 2 O-methylation steps in the ubiquinone biosynthetic pathway. The sequence is that of Ubiquinone biosynthesis O-methyltransferase from Photobacterium profundum (strain SS9).